We begin with the raw amino-acid sequence, 141 residues long: Acetyltransferase YpeA (141 aa).

Residues 1–141 (MEIRVFRQED…GKRLIEDEEY (141 aa)) enclose the N-acetyltransferase domain.

This sequence belongs to the acetyltransferase family. YpeA subfamily.

In Shigella boydii serotype 4 (strain Sb227), this protein is Acetyltransferase YpeA.